A 227-amino-acid chain; its full sequence is Hydroxylase/desaturase asaB (227 aa).

This sequence belongs to the asaB hydroxylase/desaturase family.

The protein operates within secondary metabolite biosynthesis. Functionally, hydroxylase/desaturase; part of the gene cluster that mediates the biosynthesis of aspergillic acid, a hydroxamic acid-containing pyrazinone with aliphatic side chains that originates from leucine (Leu) and isoleucine (Ile). Aspergillic acid has antibiotic properties and was shown to be lethal to mice. The first step in the pathway is the production of deoxyaspergillic acid via a condensation between the Ile amine and the Leu carboxylic acid, followed by a reductive release from the protein forming the dipeptide aldehyde NH(2)-Leu-Ile-CHO, which could undergo an intermolecular cyclization resulting in a dihydropyrazinone. As the NRPS asaC lacks a condensation domain, it is improbable that it is responsible for condensation of Leu and Ile. One possibility is that asaC acts on a previously condensed dipeptide and functions as a Leu-Ile reductase to yield deoxyaspergillic acid. After asaC forms deoxyaspergillic acid, the cytochrome P450 asaD oxidizes the pyrazinone to the hydroxamic acid-containing bioactive metabolite aspergillic acid. The hydroxylase/desaturase asaB can then convert aspergillic acid to hydroxyaspergillic acid. Both aspergillic acid and hydroxyaspergillic acid can form complexes with iron producing ferriaspergillin analogs. This Aspergillus flavus (strain ATCC 200026 / FGSC A1120 / IAM 13836 / NRRL 3357 / JCM 12722 / SRRC 167) protein is Hydroxylase/desaturase asaB.